The chain runs to 302 residues: Potassium/proton antiporter CemA (302 aa).

4 helical membrane-spanning segments follow: residues 55 to 75, 187 to 207, 225 to 247, and 262 to 282; these read VFVSIQCLLSLIFIPLIITFL, FVSFGTFALLVIILKPQIIIL, FLLILGTDLLVGFHSPRGWELFL, and FIFLFVATLPVLLDTVFKYWI.

Belongs to the CemA family.

The protein resides in the plastid. It localises to the chloroplast inner membrane. It carries out the reaction K(+)(in) + H(+)(out) = K(+)(out) + H(+)(in). Functionally, contributes to K(+)/H(+) antiport activity by supporting proton efflux to control proton extrusion and homeostasis in chloroplasts in a light-dependent manner to modulate photosynthesis. Prevents excessive induction of non-photochemical quenching (NPQ) under continuous-light conditions. Indirectly promotes efficient inorganic carbon uptake into chloroplasts. This chain is Potassium/proton antiporter CemA, found in Tupiella akineta (Green alga).